The primary structure comprises 260 residues: 3-alpha-(or 20-beta)-hydroxysteroid dehydrogenase (260 aa).

NAD(+)-binding residues include Arg17, Met19, Asp38, Asp61, Val62, Asn88, Tyr153, Lys157, Val186, Thr188, and Thr191. Tyr153 functions as the Proton acceptor in the catalytic mechanism.

The protein belongs to the short-chain dehydrogenases/reductases (SDR) family. In terms of assembly, homotetramer.

It catalyses the reaction androstan-3alpha,17beta-diol + NAD(+) = 17beta-hydroxyandrostanone + NADH + H(+). It participates in lipid metabolism; steroid degradation. In terms of biological role, probably involved in steroid metabolism. The chain is 3-alpha-(or 20-beta)-hydroxysteroid dehydrogenase (fabG3) from Mycobacterium tuberculosis (strain CDC 1551 / Oshkosh).